A 348-amino-acid polypeptide reads, in one-letter code: DNA-directed RNA polymerase subunit alpha (348 aa).

An alpha N-terminal domain (alpha-NTD) region spans residues 1–243 (MLIKQGDRLI…DQISVFINFD (243 aa)). Residues 260–348 (VNENLFKGID…WLKRKQQNEA (89 aa)) form an alpha C-terminal domain (alpha-CTD) region.

Belongs to the RNA polymerase alpha chain family. In terms of assembly, homodimer. The RNAP catalytic core consists of 2 alpha, 1 beta, 1 beta' and 1 omega subunit. When a sigma factor is associated with the core the holoenzyme is formed, which can initiate transcription.

The catalysed reaction is RNA(n) + a ribonucleoside 5'-triphosphate = RNA(n+1) + diphosphate. In terms of biological role, DNA-dependent RNA polymerase catalyzes the transcription of DNA into RNA using the four ribonucleoside triphosphates as substrates. This is DNA-directed RNA polymerase subunit alpha from Oleidesulfovibrio alaskensis (strain ATCC BAA-1058 / DSM 17464 / G20) (Desulfovibrio alaskensis).